Consider the following 204-residue polypeptide: Thymidylate kinase (204 aa).

Residue 9–16 coordinates ATP; it reads GIEASGKT.

Belongs to the thymidylate kinase family.

It catalyses the reaction dTMP + ATP = dTDP + ADP. Phosphorylation of dTMP to form dTDP in both de novo and salvage pathways of dTTP synthesis. This Sulfurihydrogenibium sp. (strain YO3AOP1) protein is Thymidylate kinase.